Here is a 252-residue protein sequence, read N- to C-terminus: Tabtoxin biosynthesis enzyme (252 aa).

The segment at 1–23 (MYQRTATQLARKPASKQGETEMN) is disordered.

May play a role in tabtoxin biosynthesis. In Pseudomonas amygdali pv. tabaci (Pseudomonas syringae pv. tabaci), this protein is Tabtoxin biosynthesis enzyme (tblA).